The primary structure comprises 95 residues: Aspartyl/glutamyl-tRNA(Asn/Gln) amidotransferase subunit C (95 aa).

It belongs to the GatC family. In terms of assembly, heterotrimer of A, B and C subunits.

The enzyme catalyses L-glutamyl-tRNA(Gln) + L-glutamine + ATP + H2O = L-glutaminyl-tRNA(Gln) + L-glutamate + ADP + phosphate + H(+). The catalysed reaction is L-aspartyl-tRNA(Asn) + L-glutamine + ATP + H2O = L-asparaginyl-tRNA(Asn) + L-glutamate + ADP + phosphate + 2 H(+). Functionally, allows the formation of correctly charged Asn-tRNA(Asn) or Gln-tRNA(Gln) through the transamidation of misacylated Asp-tRNA(Asn) or Glu-tRNA(Gln) in organisms which lack either or both of asparaginyl-tRNA or glutaminyl-tRNA synthetases. The reaction takes place in the presence of glutamine and ATP through an activated phospho-Asp-tRNA(Asn) or phospho-Glu-tRNA(Gln). This chain is Aspartyl/glutamyl-tRNA(Asn/Gln) amidotransferase subunit C, found in Geobacter metallireducens (strain ATCC 53774 / DSM 7210 / GS-15).